Reading from the N-terminus, the 166-residue chain is Protein SprT (166 aa).

One can recognise a SprT-like domain in the interval 19-164 (REHLAKANLK…CVHCGDLLVA (146 aa)). His78 lines the Zn(2+) pocket. Glu79 is a catalytic residue. His82 lines the Zn(2+) pocket.

This sequence belongs to the SprT family. Zn(2+) is required as a cofactor.

The protein localises to the cytoplasm. The protein is Protein SprT of Klebsiella pneumoniae (strain 342).